Consider the following 232-residue polypeptide: Uracil-DNA glycosylase (232 aa).

Asp-66 serves as the catalytic Proton acceptor.

It belongs to the uracil-DNA glycosylase (UDG) superfamily. UNG family.

It is found in the cytoplasm. It catalyses the reaction Hydrolyzes single-stranded DNA or mismatched double-stranded DNA and polynucleotides, releasing free uracil.. Excises uracil residues from the DNA which can arise as a result of misincorporation of dUMP residues by DNA polymerase or due to deamination of cytosine. This chain is Uracil-DNA glycosylase, found in Lactobacillus helveticus (strain DPC 4571).